The primary structure comprises 199 residues: Large ribosomal subunit protein bL25 (199 aa).

Residues 1-21 (MNIEKTLSVQKREGYGKGPSG) form a disordered region.

Belongs to the bacterial ribosomal protein bL25 family. CTC subfamily. Part of the 50S ribosomal subunit; part of the 5S rRNA/L5/L18/L25 subcomplex. Contacts the 5S rRNA. Binds to the 5S rRNA independently of L5 and L18.

Functionally, this is one of the proteins that binds to the 5S RNA in the ribosome where it forms part of the central protuberance. This chain is Large ribosomal subunit protein bL25, found in Desulfovibrio desulfuricans (strain ATCC 27774 / DSM 6949 / MB).